The following is an 811-amino-acid chain: DNA mismatch repair protein MutS (811 aa).

ATP is bound at residue 583–590 (GPNMAGKS).

This sequence belongs to the DNA mismatch repair MutS family.

In terms of biological role, this protein is involved in the repair of mismatches in DNA. It is possible that it carries out the mismatch recognition step. This protein has a weak ATPase activity. This chain is DNA mismatch repair protein MutS, found in Thermus thermophilus (strain ATCC BAA-163 / DSM 7039 / HB27).